Reading from the N-terminus, the 169-residue chain is uncharacterized protein (169 aa).

A helical transmembrane segment spans residues 55–77 (SLFIFKAVMILHTCLIVKSIRIF).

Its subcellular location is the membrane. This is an uncharacterized protein from Saccharomyces cerevisiae (strain ATCC 204508 / S288c) (Baker's yeast).